The chain runs to 334 residues: Geranylgeranyl pyrophosphate synthase idtG (334 aa).

Isopentenyl diphosphate-binding residues include Lys49, Arg52, and His81. Mg(2+) is bound by residues Asp88 and Asp92. Arg97 is a dimethylallyl diphosphate binding site. Arg98 lines the isopentenyl diphosphate pocket. Positions 175, 176, and 209 each coordinate dimethylallyl diphosphate. A Mg(2+)-binding site is contributed by Asp212. 3 residues coordinate dimethylallyl diphosphate: Asn216, Lys226, and Lys236.

The protein belongs to the FPP/GGPP synthase family. The cofactor is Mg(2+).

The enzyme catalyses isopentenyl diphosphate + dimethylallyl diphosphate = (2E)-geranyl diphosphate + diphosphate. The catalysed reaction is isopentenyl diphosphate + (2E)-geranyl diphosphate = (2E,6E)-farnesyl diphosphate + diphosphate. It catalyses the reaction isopentenyl diphosphate + (2E,6E)-farnesyl diphosphate = (2E,6E,10E)-geranylgeranyl diphosphate + diphosphate. Its pathway is secondary metabolite biosynthesis. In terms of biological role, geranylgeranyl pyrophosphate synthase; part of the gene cluster that mediates the biosynthesis of paspalitrems, indole-diterpene (IDT) mycotoxins that are potent tremorgens in mammals. The geranylgeranyl diphosphate (GGPP) synthase idtG is proposed to catalyze the first step in IDT biosynthesis via catalysis of a series of iterative condensations of isopentenyl diphosphate (IPP) with dimethylallyl diphosphate (DMAPP), geranyl diphosphate (GPP), and farnesyl diphosphate (FPP), to form GGPP. Condensation of indole-3-glycerol phosphate with GGPP by the prenyltransferase idtC then forms 3-geranylgeranylindole (3-GGI). Epoxidation of the two terminal alkenes of the geranylgeranyl moiety by the FAD-dependent monooxygenase idtM, and cyclization by the terpene cyclase idtB then leads to the production of paspaline. The cytochrome P450 monooxygenase idtP then catalyzes oxidative elimination of the pendant methyl group at C-12 of paspaline and generates the C-10 ketone to yield 13-desoxypaxilline. The cytochrome P450 monooxygenase idtQ may catalyze the C-13 oxidation of 13-desoxypaxilline to afford paxilline. Considering that both paspalicine and paxilline were detected in C.paspali, idtQ also catalyzes the formation of paspalinine from 13-desoxypaxilline via paspalicine as an intermediate. Finally, the alpha-prenyltransferase idtF prenylates paspalinine at the C-20 or the C-21 positions to yield paspalitrems A and C, respectively. The hydroxylation of paspalitrem A at C-32 by a still unknown oxidase affords paspalitrem B. In Claviceps paspali (Rye ergot fungus), this protein is Geranylgeranyl pyrophosphate synthase idtG.